The chain runs to 698 residues: Elongation factor G (698 aa).

Residues 10-285 (AATRNIGIMA…AVVDFLPSPT (276 aa)) form the tr-type G domain. Residues 19-26 (AHIDAGKT), 83-87 (DTPGH), and 137-140 (NKMD) contribute to the GTP site.

This sequence belongs to the TRAFAC class translation factor GTPase superfamily. Classic translation factor GTPase family. EF-G/EF-2 subfamily.

Its subcellular location is the cytoplasm. Its function is as follows. Catalyzes the GTP-dependent ribosomal translocation step during translation elongation. During this step, the ribosome changes from the pre-translocational (PRE) to the post-translocational (POST) state as the newly formed A-site-bound peptidyl-tRNA and P-site-bound deacylated tRNA move to the P and E sites, respectively. Catalyzes the coordinated movement of the two tRNA molecules, the mRNA and conformational changes in the ribosome. The sequence is that of Elongation factor G from Parafrankia sp. (strain EAN1pec).